A 440-amino-acid polypeptide reads, in one-letter code: Phosphatidylglycerol--prolipoprotein diacylglyceryl transferase (440 aa).

A run of 4 helical transmembrane segments spans residues 21 to 41 (VPIR…LLIG), 53 to 73 (GVIY…GRLY), 96 to 116 (IWDG…GAWI), and 122 to 142 (GIPL…AQAI). Residue arginine 144 coordinates a 1,2-diacyl-sn-glycero-3-phospho-(1'-sn-glycerol). The next 2 helical transmembrane spans lie at 189–209 (VALV…LIFV) and 256–276 (INSF…MAAP). Residues 280–440 (EDPESLRGNQ…ARLRDRLSGR (161 aa)) form a disordered region. A compositionally biased stretch (low complexity) spans 299 to 330 (EPATVAATTEAATEGVAAPADGAEAAGADATA). Over residues 332–346 (RPEESAEPDVEKPES) the composition is skewed to basic and acidic residues. Over residues 347 to 417 (EETEAEAAEE…PEQPVAEEPE (71 aa)) the composition is skewed to acidic residues. Positions 424-440 (ETKRRWGARLRDRLSGR) are enriched in basic and acidic residues.

Belongs to the Lgt family.

The protein localises to the cell membrane. The enzyme catalyses L-cysteinyl-[prolipoprotein] + a 1,2-diacyl-sn-glycero-3-phospho-(1'-sn-glycerol) = an S-1,2-diacyl-sn-glyceryl-L-cysteinyl-[prolipoprotein] + sn-glycerol 1-phosphate + H(+). Its pathway is protein modification; lipoprotein biosynthesis (diacylglyceryl transfer). In terms of biological role, catalyzes the transfer of the diacylglyceryl group from phosphatidylglycerol to the sulfhydryl group of the N-terminal cysteine of a prolipoprotein, the first step in the formation of mature lipoproteins. This is Phosphatidylglycerol--prolipoprotein diacylglyceryl transferase from Mycobacterium avium (strain 104).